The chain runs to 130 residues: Small ribosomal subunit protein uS8 (130 aa).

It belongs to the universal ribosomal protein uS8 family. As to quaternary structure, part of the 30S ribosomal subunit. Contacts proteins S5 and S12.

Its function is as follows. One of the primary rRNA binding proteins, it binds directly to 16S rRNA central domain where it helps coordinate assembly of the platform of the 30S subunit. The sequence is that of Small ribosomal subunit protein uS8 from Sodalis glossinidius (strain morsitans).